Consider the following 397-residue polypeptide: Carbamoyl phosphate synthase small chain (397 aa).

A CPSase region spans residues 1–204 (MSPLLPSFPF…PAYRTLDTSK (204 aa)). L-glutamine is bound by residues Ser-53, Gly-256, and Gly-258. The region spanning 208 to 395 (KVVAYDFGVK…MELMNAAKKE (188 aa)) is the Glutamine amidotransferase type-1 domain. The Nucleophile role is filled by Cys-284. L-glutamine-binding residues include Leu-285, Gln-288, Asn-326, Gly-328, and Phe-329. Active-site residues include His-368 and Glu-370.

Belongs to the CarA family. As to quaternary structure, composed of two chains; the small (or glutamine) chain promotes the hydrolysis of glutamine to ammonia, which is used by the large (or ammonia) chain to synthesize carbamoyl phosphate. Tetramer of heterodimers (alpha,beta)4.

It catalyses the reaction hydrogencarbonate + L-glutamine + 2 ATP + H2O = carbamoyl phosphate + L-glutamate + 2 ADP + phosphate + 2 H(+). The catalysed reaction is L-glutamine + H2O = L-glutamate + NH4(+). It participates in amino-acid biosynthesis; L-arginine biosynthesis; carbamoyl phosphate from bicarbonate: step 1/1. It functions in the pathway pyrimidine metabolism; UMP biosynthesis via de novo pathway; (S)-dihydroorotate from bicarbonate: step 1/3. Small subunit of the glutamine-dependent carbamoyl phosphate synthetase (CPSase). CPSase catalyzes the formation of carbamoyl phosphate from the ammonia moiety of glutamine, carbonate, and phosphate donated by ATP, constituting the first step of 2 biosynthetic pathways, one leading to arginine and/or urea and the other to pyrimidine nucleotides. The small subunit (glutamine amidotransferase) binds and cleaves glutamine to supply the large subunit with the substrate ammonia. The chain is Carbamoyl phosphate synthase small chain from Polynucleobacter asymbioticus (strain DSM 18221 / CIP 109841 / QLW-P1DMWA-1) (Polynucleobacter necessarius subsp. asymbioticus).